A 180-amino-acid chain; its full sequence is uncharacterized protein (180 aa).

The tract at residues 1–93 (MPSSVPKTSI…LPRRRNPGWV (93 aa)) is disordered. Composition is skewed to low complexity over residues 9–25 (SIESLGSPSSLSSSQAS) and 47–64 (LTSSTESLGYLSSLSSSQ).

This is an uncharacterized protein from Homo sapiens (Human).